The sequence spans 269 residues: Shikimate dehydrogenase (NADP(+)) (269 aa).

Residues 17–19 (SKS) and T64 contribute to the shikimate site. Catalysis depends on K68, which acts as the Proton acceptor. D80 contributes to the NADP(+) binding site. Residues N89 and D105 each contribute to the shikimate site. NADP(+) is bound by residues 130 to 134 (GAGGA), 154 to 159 (NRTRAK), and M213. Position 215 (Y215) interacts with shikimate. G237 contributes to the NADP(+) binding site.

Belongs to the shikimate dehydrogenase family. In terms of assembly, homodimer.

It catalyses the reaction shikimate + NADP(+) = 3-dehydroshikimate + NADPH + H(+). It functions in the pathway metabolic intermediate biosynthesis; chorismate biosynthesis; chorismate from D-erythrose 4-phosphate and phosphoenolpyruvate: step 4/7. In terms of biological role, involved in the biosynthesis of the chorismate, which leads to the biosynthesis of aromatic amino acids. Catalyzes the reversible NADPH linked reduction of 3-dehydroshikimate (DHSA) to yield shikimate (SA). The protein is Shikimate dehydrogenase (NADP(+)) of Neisseria gonorrhoeae (strain ATCC 700825 / FA 1090).